Reading from the N-terminus, the 417-residue chain is Serine/threonine-protein kinase PkaB (417 aa).

A Protein kinase domain is found at 9 to 270; that stretch reads YTAHQILGRG…ELSARLRELL (262 aa). Residues 15–23 and K36 each bind ATP; that span reads LGRGSAGTV. D130 (proton acceptor) is an active-site residue. Disordered regions lie at residues 279–371 and 395–417; these read LDVD…RAAT and LATG…PAAP. Acidic residues predominate over residues 280 to 293; that stretch reads DVDEPDAEQPEDAP. 2 stretches are compositionally biased toward low complexity: residues 294–308 and 349–368; these read DASA…STAE and GTAR…ARNR. Positions 408 to 417 are enriched in polar residues; it reads DTRNSAPAAP.

It belongs to the protein kinase superfamily. Ser/Thr protein kinase family. Autophosphorylated mainly at Thr.

It carries out the reaction L-seryl-[protein] + ATP = O-phospho-L-seryl-[protein] + ADP + H(+). The enzyme catalyses L-threonyl-[protein] + ATP = O-phospho-L-threonyl-[protein] + ADP + H(+). The polypeptide is Serine/threonine-protein kinase PkaB (pkaB) (Streptomyces coelicolor (strain ATCC BAA-471 / A3(2) / M145)).